The following is an 850-amino-acid chain: Envelope glycoprotein gp160 (850 aa).

A signal peptide spans 1 to 28 (METQTSWLSLWRWGLMIFGMLMICSARE). The Extracellular segment spans residues 29-678 (NLWVTVYYGV…ISNWLWYIKI (650 aa)). A disulfide bond links Cys50 and Cys70. Asn84, Asn126, Asn133, Asn134, Asn139, Asn152, Asn156, Asn184, Asn193, Asn226, Asn230, Asn237, Asn258, Asn272, Asn285, Asn297, Asn327, Asn334, and Asn349 each carry an N-linked (GlcNAc...) asparagine; by host glycan. 5 disulfide bridges follow: Cys115-Cys201, Cys122-Cys192, Cys127-Cys153, Cys214-Cys243, and Cys224-Cys235. The interval 127-152 (CSDVNSNNSTDSNSSASNNSPEIMKN) is V1. A V2 region spans residues 153 to 192 (CSFNVTTEIRNKRKQEYALFYRQDVVPINSDNKSYILINC). Positions 292-325 (CTRPNNNTRKGIHMGPGQVLYATGEIIGDIRKAY) are V3. An intrachain disulfide couples Cys292 to Cys326. The interval 357–367 (PSGGDIEITTH) is CD4-binding loop. 2 cysteine pairs are disulfide-bonded: Cys371–Cys436 and Cys378–Cys409. The tract at residues 378-409 (CNTSTLFNSSWDENNIKDTNSTNDNTTITIPC) is V4. 8 N-linked (GlcNAc...) asparagine; by host glycosylation sites follow: Asn379, Asn385, Asn397, Asn402, Asn433, Asn439, Asn453, and Asn457. The interval 447-467 (RDGGNRNGSENGTETFRPTGG) is disordered. The segment covering 453–462 (NGSENGTETF) has biased composition (polar residues). 2 V5 regions span residues 453–465 (NGSE…FRPT) and 454–465 (GSENGTETFRPT). The segment at 506–526 (AVGIGAVFLGFLGTAGSTMGA) is fusion peptide. Positions 568–586 (KQLQARVLAVERYLKDQQL) are immunosuppression. Cys592 and Cys598 are oxidised to a cystine. N-linked (GlcNAc...) asparagine; by host glycans are attached at residues Asn605, Asn610, Asn619, Asn631, and Asn668. Positions 627–661 (REINNYTGIIYSLIEEAQNQQETNEKDLLALDKWT) form a coiled coil. Residues 656-677 (ALDKWTNLWNWFNISNWLWYIK) form an MPER; binding to GalCer region. A helical membrane pass occupies residues 679–699 (FIMIIGGLIGLRIIFAVLAIV). Residues 700–850 (NRVRQGYSPL…IRQGLERALL (151 aa)) lie on the Cytoplasmic side of the membrane. The YXXL motif; contains endocytosis signal signature appears at 706 to 709 (YSPL). A lipid anchor (S-palmitoyl cysteine; by host) is attached at Cys758. The Di-leucine internalization motif signature appears at 849–850 (LL).

This sequence belongs to the HIV-1 env protein family. In terms of assembly, the mature envelope protein (Env) consists of a homotrimer of non-covalently associated gp120-gp41 heterodimers. The resulting complex protrudes from the virus surface as a spike. There seems to be as few as 10 spikes on the average virion. Interacts with host CD4, CCR5 and CXCR4. Gp120 also interacts with the C-type lectins CD209/DC-SIGN and CLEC4M/DC-SIGNR (collectively referred to as DC-SIGN(R)). Gp120 and gp41 interact with GalCer. Gp120 interacts with host ITGA4/ITGB7 complex; on CD4+ T-cells, this interaction results in rapid activation of integrin ITGAL/LFA-1, which facilitates efficient cell-to-cell spreading of HIV-1. Gp120 interacts with cell-associated heparan sulfate; this interaction increases virus infectivity on permissive cells and may be involved in infection of CD4- cells. As to quaternary structure, the mature envelope protein (Env) consists of a homotrimer of non-covalently associated gp120-gp41 heterodimers. The resulting complex protrudes from the virus surface as a spike. There seems to be as few as 10 spikes on the average virion. In terms of processing, highly glycosylated by host. The high number of glycan on the protein is reffered to as 'glycan shield' because it contributes to hide protein sequence from adaptive immune system. Post-translationally, palmitoylation of the transmembrane protein and of Env polyprotein (prior to its proteolytic cleavage) is essential for their association with host cell membrane lipid rafts. Palmitoylation is therefore required for envelope trafficking to classical lipid rafts, but not for viral replication. Specific enzymatic cleavages in vivo yield mature proteins. Envelope glycoproteins are synthesized as an inactive precursor that is heavily N-glycosylated and processed likely by host cell furin in the Golgi to yield the mature SU and TM proteins. The cleavage site between SU and TM requires the minimal sequence [KR]-X-[KR]-R. About 2 of the 9 disulfide bonds of gp41 are reduced by P4HB/PDI, following binding to CD4 receptor.

The protein resides in the virion membrane. The protein localises to the host cell membrane. It localises to the host endosome membrane. Functionally, oligomerizes in the host endoplasmic reticulum into predominantly trimers. In a second time, gp160 transits in the host Golgi, where glycosylation is completed. The precursor is then proteolytically cleaved in the trans-Golgi and thereby activated by cellular furin or furin-like proteases to produce gp120 and gp41. Attaches the virus to the host lymphoid cell by binding to the primary receptor CD4. This interaction induces a structural rearrangement creating a high affinity binding site for a chemokine coreceptor like CXCR4 and/or CCR5. Acts as a ligand for CD209/DC-SIGN and CLEC4M/DC-SIGNR, which are respectively found on dendritic cells (DCs), and on endothelial cells of liver sinusoids and lymph node sinuses. These interactions allow capture of viral particles at mucosal surfaces by these cells and subsequent transmission to permissive cells. HIV subverts the migration properties of dendritic cells to gain access to CD4+ T-cells in lymph nodes. Virus transmission to permissive T-cells occurs either in trans (without DCs infection, through viral capture and transmission), or in cis (following DCs productive infection, through the usual CD4-gp120 interaction), thereby inducing a robust infection. In trans infection, bound virions remain infectious over days and it is proposed that they are not degraded, but protected in non-lysosomal acidic organelles within the DCs close to the cell membrane thus contributing to the viral infectious potential during DCs' migration from the periphery to the lymphoid tissues. On arrival at lymphoid tissues, intact virions recycle back to DCs' cell surface allowing virus transmission to CD4+ T-cells. Its function is as follows. Acts as a class I viral fusion protein. Under the current model, the protein has at least 3 conformational states: pre-fusion native state, pre-hairpin intermediate state, and post-fusion hairpin state. During fusion of viral and target intracellular membranes, the coiled coil regions (heptad repeats) assume a trimer-of-hairpins structure, positioning the fusion peptide in close proximity to the C-terminal region of the ectodomain. The formation of this structure appears to drive apposition and subsequent fusion of viral and target cell membranes. Complete fusion occurs in host cell endosomes and is dynamin-dependent, however some lipid transfer might occur at the plasma membrane. The virus undergoes clathrin-dependent internalization long before endosomal fusion, thus minimizing the surface exposure of conserved viral epitopes during fusion and reducing the efficacy of inhibitors targeting these epitopes. Membranes fusion leads to delivery of the nucleocapsid into the cytoplasm. In Human immunodeficiency virus type 1 group M subtype J (isolate SE9173) (HIV-1), this protein is Envelope glycoprotein gp160.